A 627-amino-acid chain; its full sequence is Druantia protein DruC (627 aa).

It localises to the cytoplasm. Component of antiviral defense system Druantia type I, composed of DruA, DruB, DruC, DruD and DruE. Expression of Druantia in E.coli (strain MG1655) confers resistance to phage lambda, SECphi18, SECphi27 and T4. The polypeptide is Druantia protein DruC (Escherichia coli (strain UMEA 4076-1)).